Here is a 619-residue protein sequence, read N- to C-terminus: Mitogen-activated protein kinase kinase kinase 2 (619 aa).

4 disordered regions span residues 25–44 (LSLQ…QNDV), 126–168 (QATN…PPPG), 201–245 (LDPL…DNHQ), and 289–355 (RTQG…APTN). Ser-26 carries the phosphoserine modification. Positions 43–122 (DVRVKFEHRG…KSLKILLVVN (80 aa)) constitute a PB1 domain. The segment covering 126 to 143 (QATNLEPSPSPEDLNNTP) has biased composition (polar residues). Residues Ser-153 and Ser-164 each carry the phosphoserine modification. A compositionally biased stretch (low complexity) spans 203-219 (PLSLSSPENSGSGSCPS). Phosphoserine occurs at positions 239, 297, 311, 331, 344, and 349. Polar residues predominate over residues 290–299 (TQGTSFRSPV). Residues 300–315 (SFSPTDHSLSTSSGSS) are compositionally biased toward low complexity. Basic and acidic residues predominate over residues 322–332 (DDSRIRRRGSD). A compositionally biased stretch (polar residues) spans 336–346 (PTLTVTDISPP). Residues 356-616 (WRLGKLLGQG…AEELLRHMFV (261 aa)) enclose the Protein kinase domain. ATP is bound by residues 362–370 (LGQGAFGRV) and Lys-385. Residue Asp-483 is the Proton acceptor of the active site.

Belongs to the protein kinase superfamily. STE Ser/Thr protein kinase family. MAP kinase kinase kinase subfamily. In terms of assembly, self-associates. Binds both upstream activators and downstream substrates in multimolecular complexes. Interacts (via the kinase catalytic domain) with STK38. Interacts with XIAP/BIRC4. The cofactor is Mg(2+). Ubiquitination by XIAP/BIRC4 does not lead to proteasomal degradation. In terms of processing, autophosphorylated.

It localises to the cytoplasm. Its subcellular location is the nucleus. The enzyme catalyses L-seryl-[protein] + ATP = O-phospho-L-seryl-[protein] + ADP + H(+). It catalyses the reaction L-threonyl-[protein] + ATP = O-phospho-L-threonyl-[protein] + ADP + H(+). Activated by phosphorylation on Thr-524. Interacts with PKN2; the interaction activates PKN2 kinase activity in a MAP3K2-independent kinase activity. Its function is as follows. Component of a protein kinase signal transduction cascade. Regulates the JNK and ERK5 pathways by phosphorylating and activating MAP2K5 and MAP2K7. Plays a role in caveolae kiss-and-run dynamics. The protein is Mitogen-activated protein kinase kinase kinase 2 (Map3k2) of Mus musculus (Mouse).